We begin with the raw amino-acid sequence, 858 residues long: Leucine--tRNA ligase (858 aa).

The short motif at 42 to 52 (PYPSGRLHMGH) is the 'HIGH' region element. The short motif at 618–622 (KMSKS) is the 'KMSKS' region element. ATP is bound at residue Lys-621.

It belongs to the class-I aminoacyl-tRNA synthetase family.

The protein resides in the cytoplasm. It catalyses the reaction tRNA(Leu) + L-leucine + ATP = L-leucyl-tRNA(Leu) + AMP + diphosphate. This Vibrio cholerae serotype O1 (strain ATCC 39315 / El Tor Inaba N16961) protein is Leucine--tRNA ligase.